An 879-amino-acid polypeptide reads, in one-letter code: Fanconi anemia core complex-associated protein 100 (879 aa).

Belongs to the multisubunit FA complex composed of FANCA, FANCB, FANCC, FANCE, FANCF, FANCG, FANCL/PHF9, FANCM, FAAP24 and FAAP100. Forms a subcomplex with FANCB and FANCL.

It localises to the nucleus. Plays a role in Fanconi anemia-associated DNA damage response network. Regulates FANCD2 monoubiquitination and the stability of the FA core complex. Induces chromosomal instability as well as hypersensitivity to DNA cross-linking agents, when repressed. The polypeptide is Fanconi anemia core complex-associated protein 100 (Mus musculus (Mouse)).